A 339-amino-acid polypeptide reads, in one-letter code: Transcription initiation factor IIB (339 aa).

Residues 39 to 70 form a TFIIB-type zinc finger; it reads EELICPMCGSKNIIKDYERAEIVCETCGCVLQ. Positions 43, 46, 62, and 65 each coordinate Zn(2+). 2 tandem repeats follow at residues 156 to 239 and 250 to 331.

Belongs to the TFIIB family.

Functionally, stabilizes TBP binding to an archaeal box-A promoter. Also responsible for recruiting RNA polymerase II to the pre-initiation complex (DNA-TBP-TFIIB). The protein is Transcription initiation factor IIB of Methanothermococcus thermolithotrophicus (Methanococcus thermolithotrophicus).